We begin with the raw amino-acid sequence, 590 residues long: Aspartate--tRNA ligase (590 aa).

Glu-174 serves as a coordination point for L-aspartate. The segment at Gln-198–Lys-201 is aspartate. Arg-220 provides a ligand contact to L-aspartate. Residues Arg-220–Glu-222 and Gln-229 each bind ATP. Residue His-443 coordinates L-aspartate. Residue Glu-484 coordinates ATP. Arg-491 is an L-aspartate binding site. ATP is bound at residue Gly-536–Arg-539.

This sequence belongs to the class-II aminoacyl-tRNA synthetase family. Type 1 subfamily. Homodimer.

It is found in the cytoplasm. It carries out the reaction tRNA(Asp) + L-aspartate + ATP = L-aspartyl-tRNA(Asp) + AMP + diphosphate. Its function is as follows. Catalyzes the attachment of L-aspartate to tRNA(Asp) in a two-step reaction: L-aspartate is first activated by ATP to form Asp-AMP and then transferred to the acceptor end of tRNA(Asp). This chain is Aspartate--tRNA ligase, found in Lactococcus lactis subsp. lactis (strain IL1403) (Streptococcus lactis).